The sequence spans 424 residues: 3-isopropylmalate dehydratase large subunit 1 (424 aa).

[4Fe-4S] cluster contacts are provided by C303, C363, and C366.

It belongs to the aconitase/IPM isomerase family. LeuC type 2 subfamily. Heterodimer of LeuC and LeuD. [4Fe-4S] cluster is required as a cofactor.

The catalysed reaction is (2R,3S)-3-isopropylmalate = (2S)-2-isopropylmalate. It participates in amino-acid biosynthesis; L-leucine biosynthesis; L-leucine from 3-methyl-2-oxobutanoate: step 2/4. Functionally, catalyzes the isomerization between 2-isopropylmalate and 3-isopropylmalate, via the formation of 2-isopropylmaleate. The sequence is that of 3-isopropylmalate dehydratase large subunit 1 from Pyrococcus furiosus (strain ATCC 43587 / DSM 3638 / JCM 8422 / Vc1).